Consider the following 146-residue polypeptide: Small ribosomal subunit protein bS6 (146 aa).

The interval 106–146 (QAAATQRAAERRAQREAERNAAQAQSSASNQARTAATTSGK) is disordered. The span at 113 to 124 (AAERRAQREAER) shows a compositional bias: basic and acidic residues. Residues 125-146 (NAAQAQSSASNQARTAATTSGK) show a composition bias toward low complexity.

It belongs to the bacterial ribosomal protein bS6 family.

Its function is as follows. Binds together with bS18 to 16S ribosomal RNA. This chain is Small ribosomal subunit protein bS6, found in Oenococcus oeni (strain ATCC BAA-331 / PSU-1).